We begin with the raw amino-acid sequence, 270 residues long: MSKIAKTAIISPKAEVGKGVEIGEFCVIGDGIKLDDGVKLHNNVTLQGHTFIGKNTEIFPFVVLGTQPQDLKYKGEYSELIVGEDNLIREFCMINPGTEGGIKKTIIGDKNLLMAYVHVAHDCVIGNHCILANGVTLAGHVEVGDYVNIGGLTAIHQFVRIAKGSMIAGKSALGKDVPPYCLAEGNRAFIKGLNRHRMRQLLESKDIDFIHALYKRLFRPVLSLRESAKLELEEHANNPIVEEICSFILASSRGVAYKSSEYSSEEKQED.

The protein belongs to the transferase hexapeptide repeat family. LpxA subfamily. Homotrimer.

It localises to the cytoplasm. It catalyses the reaction a (3R)-hydroxyacyl-[ACP] + UDP-N-acetyl-alpha-D-glucosamine = a UDP-3-O-[(3R)-3-hydroxyacyl]-N-acetyl-alpha-D-glucosamine + holo-[ACP]. It participates in glycolipid biosynthesis; lipid IV(A) biosynthesis; lipid IV(A) from (3R)-3-hydroxytetradecanoyl-[acyl-carrier-protein] and UDP-N-acetyl-alpha-D-glucosamine: step 1/6. In terms of biological role, involved in the biosynthesis of lipid A, a phosphorylated glycolipid that anchors the lipopolysaccharide to the outer membrane of the cell. The sequence is that of Acyl-[acyl-carrier-protein]--UDP-N-acetylglucosamine O-acyltransferase from Helicobacter acinonychis (strain Sheeba).